A 39-amino-acid polypeptide reads, in one-letter code: Photosystem II reaction center protein Y (39 aa).

The helical transmembrane segment at Leu-7–Ile-25 threads the bilayer.

The protein belongs to the PsbY family. As to quaternary structure, PSII is composed of 1 copy each of membrane proteins PsbA, PsbB, PsbC, PsbD, PsbE, PsbF, PsbH, PsbI, PsbJ, PsbK, PsbL, PsbM, PsbT, PsbX, PsbY, PsbZ, Psb30/Ycf12, peripheral proteins PsbO, CyanoQ (PsbQ), PsbU, PsbV and a large number of cofactors. It forms dimeric complexes.

The protein localises to the cellular thylakoid membrane. Loosely associated component of the core of photosystem II (PSII), it is not always seen in crystals. PSII is a light-driven water plastoquinone oxidoreductase, using light energy to abstract electrons from H(2)O, generating a proton gradient subsequently used for ATP formation. In Trichodesmium erythraeum (strain IMS101), this protein is Photosystem II reaction center protein Y.